The chain runs to 304 residues: N-acetyl-D-glucosamine kinase (304 aa).

ATP is bound by residues 4–11 (GFDMGGTK) and 133–140 (GVGGGLIV). The Zn(2+) site is built by His157, Cys177, Cys179, and Cys184.

Belongs to the ROK (NagC/XylR) family. NagK subfamily.

It catalyses the reaction N-acetyl-D-glucosamine + ATP = N-acetyl-D-glucosamine 6-phosphate + ADP + H(+). The protein operates within cell wall biogenesis; peptidoglycan recycling. Functionally, catalyzes the phosphorylation of N-acetyl-D-glucosamine (GlcNAc) derived from cell-wall degradation, yielding GlcNAc-6-P. The sequence is that of N-acetyl-D-glucosamine kinase from Yersinia pseudotuberculosis serotype IB (strain PB1/+).